The following is a 364-amino-acid chain: Palmitoyltransferase ZDHHC9 (364 aa).

At 1 to 35 the chain is on the cytoplasmic side; sequence MSVMVVRKKVTRKWEKLPGRNTFCCDGRVMMARQK. A helical transmembrane segment spans residues 36–56; that stretch reads GIFYLTLFLILGTCTLFFAFE. Over 57-63 the chain is Lumenal; that stretch reads CRYLAVQ. A helical transmembrane segment spans residues 64–84; the sequence is LSPAIPVFAAMLFLFSMATLL. Residues 85-183 are Cytoplasmic-facing; the sequence is RTSFSDPGVI…NCVGKRNYRY (99 aa). One can recognise a DHHC domain in the interval 139–189; that stretch reads KYCYTCKIFRPPRASHCSICDNCVERFDHHCPWVGNCVGKRNYRYFYLFIL. Residue Cys169 is the S-palmitoyl cysteine intermediate of the active site. A helical membrane pass occupies residues 184 to 204; the sequence is FYLFILSLSLLTIYVFAFNIV. Residues 205 to 228 lie on the Lumenal side of the membrane; that stretch reads YVALKSLKIGFLETLKETPGTVLE. Residues 229–249 traverse the membrane as a helical segment; the sequence is VLICFFTLWSVVGLTGFHTFL. Topologically, residues 250–364 are cytoplasmic; it reads VALNQTTNED…PPQEAAEAEK (115 aa). Residues 303–364 are disordered; that stretch reads PLEESGSRPP…PPQEAAEAEK (62 aa). Residues 310–323 are compositionally biased toward polar residues; sequence RPPSTQETSSSLLP. Pro residues predominate over residues 346–356; sequence EMPPPEPPEPP.

The protein belongs to the DHHC palmitoyltransferase family. ERF2/ZDHHC9 subfamily. Interacts with GOLGA7. Highly expressed in kidney, skeletal muscle, brain, lung and liver. Absent in thymus, spleen and leukocytes.

Its subcellular location is the endoplasmic reticulum membrane. The protein localises to the golgi apparatus membrane. It catalyses the reaction L-cysteinyl-[protein] + hexadecanoyl-CoA = S-hexadecanoyl-L-cysteinyl-[protein] + CoA. Functionally, palmitoyltransferase that catalyzes the addition of palmitate onto various protein substrates, such as ADRB2, GSDMD, HRAS, NRAS and CGAS. The ZDHHC9-GOLGA7 complex is a palmitoyltransferase specific for HRAS and NRAS. May have a palmitoyltransferase activity toward the beta-2 adrenergic receptor/ADRB2 and therefore regulate G protein-coupled receptor signaling. Acts as a regulator of innate immunity by catalyzing palmitoylation of CGAS, thereby promoting CGAS homodimerization and cyclic GMP-AMP synthase activity. Activates pyroptosis by catalyzing palmitoylation of gasdermin-D (GSDMD), thereby promoting membrane translocation and pore formation of GSDMD. (Microbial infection) Through a sequential action with ZDHHC20, rapidly and efficiently palmitoylates SARS coronavirus-2/SARS-CoV-2 spike protein following its synthesis in the endoplasmic reticulum (ER). In the infected cell, promotes spike biogenesis by protecting it from premature ER degradation, increases half-life and controls the lipid organization of its immediate membrane environment. Once the virus has formed, spike palmitoylation controls fusion with the target cell. In Homo sapiens (Human), this protein is Palmitoyltransferase ZDHHC9.